We begin with the raw amino-acid sequence, 1276 residues long: Sterol regulatory element-binding protein cleavage-activating protein (1276 aa).

Topologically, residues 1–18 (MTLTERLREKISQAFYNH) are cytoplasmic. The chain crosses the membrane as a helical span at residues 19 to 39 (GLLCASYPIPIILFTGLCILA). The Lumenal segment spans residues 40–279 (CCYPLLKLPL…NLVHVHFKEE (240 aa)). The interval 46 to 284 (KLPLPGTGPV…HFKEEIGIAE (239 aa)) is loop-1. The disordered stretch occupies residues 60–81 (PVKGYSPPPADSDHKQGEPSEQ). Residue asparagine 263 is glycosylated (N-linked (GlcNAc...) asparagine). The helical transmembrane segment at 280 to 300 (IGIAELIPLVTTYIILFAYIY) threads the bilayer. Residues 284–442 (ELIPLVTTYI…MLFFTTVLSI (159 aa)) form the SSD domain. Residues 301–312 (FSTRKIDMVKSK) lie on the Cytoplasmic side of the membrane. Residues 313–333 (WGLALAAVVTVLSSLLMSVGL) form a helical membrane-spanning segment. Residues 334 to 344 (CTLFGLTPTLN) lie on the Lumenal side of the membrane. The helical transmembrane segment at 345-365 (GGEIFPYLVVVIGLENVLVLT) threads the bilayer. The Cytoplasmic segment spans residues 366 to 401 (KSVVSTPVDLEVKLRIAQGLSSESWSIMKNVATELG). Residues 402–422 (IILIGYFTLVPAIQEFCLFAV) traverse the membrane as a helical segment. Residue valine 423 is a topological domain, lumenal. A helical membrane pass occupies residues 424–444 (GLVSDFFLQMLFFTTVLSIDI). The Cytoplasmic portion of the chain corresponds to 445 to 518 (RRMELADLNK…FLARTRLAQR (74 aa)). The short motif at 447–452 (MELADL) is the ER export signal element. Residues lysine 454 and lysine 466 each participate in a glycyl lysine isopeptide (Lys-Gly) (interchain with G-Cter in ubiquitin) cross-link. A helical transmembrane segment spans residues 519–539 (LIMAGTVVWIGILVYTDPAGL). Residues 535–710 (DPAGLRTYLA…QTHGDITLYK (176 aa)) are loop-7. The Lumenal segment spans residues 540–707 (RTYLAAQVTE…GGTQTHGDIT (168 aa)). N-linked (GlcNAc...) asparagine glycosylation is found at asparagine 590 and asparagine 641. Residues 708–728 (LYKVAALGLAAGIVLVLLLLC) form a helical membrane-spanning segment. Residues 729 to 1276 (LYRVLCPRNY…YVPSVLEKLD (548 aa)) are Cytoplasmic-facing. Residues 731 to 1276 (RVLCPRNYGQ…YVPSVLEKLD (546 aa)) form an interaction with SREBF2 region. The WD 1 repeat unit spans residues 771-811 (VLRGHLMDIECLASDGMLLVSCCLAGQVCVWDAQTGDCLTR). Serine 821, serine 837, serine 843, serine 850, serine 905, and serine 934 each carry phosphoserine. Positions 834-903 (ERLSDGGKAS…RHRAGCGRSR (70 aa)) are disordered. The interval 928–958 (SALRPPSPGPPLPQASQEEGTAPEKGSPPLA) is disordered. WD repeat units lie at residues 949-999 (APEK…LCCS) and 1002-1039 (EISS…SLSP). Arginine 1048 is modified (omega-N-methylarginine). 4 WD repeats span residues 1074–1111 (AHQK…CLFT), 1114–1152 (GHSG…RVSH), 1155–1192 (AHRG…KLYS), and 1194–1232 (QQDL…LLQT).

It belongs to the WD repeat SCAP family. Membrane region forms a homotetramer. Component of the SCAP-SREBP complex (composed of SCAP and SREBF1/SREBP1 or SREBF2/SREBP2); interacts with SREBF1/SREBP1 or SREBF2/SREBP2 through its C-terminal cytoplasmic domain. Forms a ternary complex with INSIG1 or INSIG2 through its transmembrane domains at high sterol concentrations. Interacts with PAQR3; the interaction anchors the SCAP-SREBP complex to the Golgi apparatus in low cholesterol conditions. Interacts with the SEC23-SEC24 complex in a SAR1-GTP-dependent manner through an ER export signal in its third cytoplasmic loop. Interacts with RNF139; the interaction inhibits the interaction of SCAP with SEC24B and hampering the ER to Golgi transport of the SCAP-SREBP complex. Interacts with SPRING1. In terms of processing, ubiquitinated at Lys-454 and Lys-466. RNF145 triggers ubiquitination of SCAP, likely inhibiting SCAP-SREBP complex transport to the Golgi apparatus and the subsequent processing/maturation of SREBF2/SREBP2.

It localises to the endoplasmic reticulum membrane. The protein localises to the golgi apparatus membrane. Its subcellular location is the cytoplasmic vesicle. It is found in the COPII-coated vesicle membrane. Escort protein required for cholesterol as well as lipid homeostasis. Regulates export of the SCAP-SREBP complex from the endoplasmic reticulum to the Golgi upon low cholesterol, thereby regulating the processing of sterol regulatory element-binding proteins (SREBPs) SREBF1/SREBP1 and SREBF2/SREBP2. At high sterol concentrations, formation of a ternary complex with INSIG (INSIG1 or INSIG2) leads to mask the ER export signal in SCAP, promoting retention of the complex in the endoplasmic reticulum. Low sterol concentrations trigger release of INSIG, a conformational change in the SSD domain of SCAP, unmasking of the ER export signal, promoting recruitment into COPII-coated vesicles and transport of the SCAP-SREBP to the Golgi: in the Golgi, SREBPs are then processed, releasing the transcription factor fragment of SREBPs from the membrane, its import into the nucleus and up-regulation of LDLR, INSIG1 and the mevalonate pathway. Binds cholesterol via its SSD domain. The protein is Sterol regulatory element-binding protein cleavage-activating protein of Rattus norvegicus (Rat).